The following is a 236-amino-acid chain: Small ribosomal subunit protein uS2c (236 aa).

It belongs to the universal ribosomal protein uS2 family.

Its subcellular location is the plastid. The protein resides in the chloroplast. The polypeptide is Small ribosomal subunit protein uS2c (rps2) (Barbarea verna (Land cress)).